Here is a 262-residue protein sequence, read N- to C-terminus: Flap endonuclease Xni (262 aa).

Mg(2+) is bound at residue Asp105. The region spanning Glu162 to Lys257 is the 5'-3' exonuclease domain. K(+) is bound by residues Leu172, Ala173, Pro181, Ile183, and Ile186. The tract at residues Gly185–Ser190 is interaction with DNA.

This sequence belongs to the Xni family. It depends on Mg(2+) as a cofactor. K(+) is required as a cofactor.

Has flap endonuclease activity. During DNA replication, flap endonucleases cleave the 5'-overhanging flap structure that is generated by displacement synthesis when DNA polymerase encounters the 5'-end of a downstream Okazaki fragment. The polypeptide is Flap endonuclease Xni (Shewanella baltica (strain OS223)).